We begin with the raw amino-acid sequence, 78 residues long: Serine rich endogenous peptide 19 (78 aa).

An N-terminal signal peptide occupies residues 1–25; that stretch reads MCNIVVFLLTLTLFLFSGLSNTAFA. An SCOOP motif motif is present at residues 50-64; that stretch reads KIEVDGSCSRRAPGR. The SxS motif essential for MIK2 binding motif lies at 56–58; the sequence is SCS. A disordered region spans residues 57-78; it reads CSRRAPGRRRPPNRPPKPCTKP. Residues 69-78 are compositionally biased toward pro residues; the sequence is NRPPKPCTKP.

The protein belongs to the serine rich endogenous peptide (SCOOP) phytocytokine family. As to quaternary structure, interacts with MIK2 (via extracellular leucine-rich repeat domain); this interaction triggers the formation of complex between MIK2 and the BAK1/SERK3 and SERK4 coreceptors, and subsequent BAK1 activation by phosphorylation.

It is found in the cell membrane. The protein localises to the secreted. Its subcellular location is the extracellular space. The protein resides in the apoplast. Its function is as follows. Brassicaceae-specific phytocytokine (plant endogenous peptide released into the apoplast) perceived by MIK2 in a BAK1/SERK3 and SERK4 coreceptors-dependent manner, that modulates various physiological and antimicrobial processes including growth prevention and reactive oxygen species (ROS) response regulation. The chain is Serine rich endogenous peptide 19 from Arabidopsis thaliana (Mouse-ear cress).